The sequence spans 319 residues: HPr kinase/phosphorylase (319 aa).

Catalysis depends on residues histidine 141 and lysine 162. 156-163 is an ATP binding site; sequence GNSGVGKS. Serine 163 provides a ligand contact to Mg(2+). Catalysis depends on aspartate 180, which acts as the Proton acceptor; for phosphorylation activity. Proton donor; for dephosphorylation activity. Residues 204–213 are important for the catalytic mechanism of both phosphorylation and dephosphorylation; that stretch reads MEIRGIGIID. Glutamate 205 provides a ligand contact to Mg(2+). The active site involves arginine 246. Positions 267 to 272 are important for the catalytic mechanism of dephosphorylation; it reads PVKVGR.

This sequence belongs to the HPrK/P family. In terms of assembly, homohexamer. It depends on Mg(2+) as a cofactor.

The catalysed reaction is [HPr protein]-L-serine + ATP = [HPr protein]-O-phospho-L-serine + ADP + H(+). The enzyme catalyses [HPr protein]-O-phospho-L-serine + phosphate + H(+) = [HPr protein]-L-serine + diphosphate. Functionally, catalyzes the ATP- as well as the pyrophosphate-dependent phosphorylation of a specific serine residue in HPr, a phosphocarrier protein of the phosphoenolpyruvate-dependent sugar phosphotransferase system (PTS). HprK/P also catalyzes the pyrophosphate-producing, inorganic phosphate-dependent dephosphorylation (phosphorolysis) of seryl-phosphorylated HPr (P-Ser-HPr). The two antagonistic activities of HprK/P are regulated by several intracellular metabolites, which change their concentration in response to the absence or presence of rapidly metabolisable carbon sources (glucose, fructose, etc.) in the growth medium. Therefore, by controlling the phosphorylation state of HPr, HPrK/P is a sensor enzyme that plays a major role in the regulation of carbon metabolism and sugar transport: it mediates carbon catabolite repression (CCR), and regulates PTS-catalyzed carbohydrate uptake and inducer exclusion. This Lactobacillus gasseri (strain ATCC 33323 / DSM 20243 / BCRC 14619 / CIP 102991 / JCM 1131 / KCTC 3163 / NCIMB 11718 / NCTC 13722 / AM63) protein is HPr kinase/phosphorylase.